The following is a 286-amino-acid chain: NAD kinase (286 aa).

Residue Asp-66 is the Proton acceptor of the active site. NAD(+) contacts are provided by residues 66 to 67, 137 to 138, Arg-148, Arg-165, Asp-167, and 178 to 183; these read DG, ND, and TAYSMS.

Belongs to the NAD kinase family. It depends on a divalent metal cation as a cofactor.

It localises to the cytoplasm. It carries out the reaction NAD(+) + ATP = ADP + NADP(+) + H(+). Its function is as follows. Involved in the regulation of the intracellular balance of NAD and NADP, and is a key enzyme in the biosynthesis of NADP. Catalyzes specifically the phosphorylation on 2'-hydroxyl of the adenosine moiety of NAD to yield NADP. This is NAD kinase from Chlorobium chlorochromatii (strain CaD3).